The chain runs to 114 residues: T cell receptor beta variable 4-2 (114 aa).

An N-terminal signal peptide occupies residues 1 to 21; it reads MGCRLLCCAVLCLLGAVPMET. The region spanning 22–114 is the Ig-like domain; sequence GVTQTPRHLV…SALYLCASSQ (93 aa). Cysteines 42 and 110 form a disulfide. 2 N-linked (GlcNAc...) asparagine glycosylation sites follow: N76 and N89.

As to quaternary structure, alpha-beta TR is a heterodimer composed of an alpha and beta chain; disulfide-linked. The alpha-beta TR is associated with the transmembrane signaling CD3 coreceptor proteins to form the TR-CD3 (TcR or TCR). The assembly of alpha-beta TR heterodimers with CD3 occurs in the endoplasmic reticulum where a single alpha-beta TR heterodimer associates with one CD3D-CD3E heterodimer, one CD3G-CD3E heterodimer and one CD247 homodimer forming a stable octameric structure. CD3D-CD3E and CD3G-CD3E heterodimers preferentially associate with TR alpha and TR beta chains, respectively. The association of the CD247 homodimer is the last step of TcR assembly in the endoplasmic reticulum and is required for transport to the cell surface.

Its subcellular location is the cell membrane. Its function is as follows. V region of the variable domain of T cell receptor (TR) beta chain that participates in the antigen recognition. Alpha-beta T cell receptors are antigen specific receptors which are essential to the immune response and are present on the cell surface of T lymphocytes. Recognize peptide-major histocompatibility (MH) (pMH) complexes that are displayed by antigen presenting cells (APC), a prerequisite for efficient T cell adaptive immunity against pathogens. Binding of alpha-beta TR to pMH complex initiates TR-CD3 clustering on the cell surface and intracellular activation of LCK that phosphorylates the ITAM motifs of CD3G, CD3D, CD3E and CD247 enabling the recruitment of ZAP70. In turn ZAP70 phosphorylates LAT, which recruits numerous signaling molecules to form the LAT signalosome. The LAT signalosome propagates signal branching to three major signaling pathways, the calcium, the mitogen-activated protein kinase (MAPK) kinase and the nuclear factor NF-kappa-B (NF-kB) pathways, leading to the mobilization of transcription factors that are critical for gene expression and essential for T cell growth and differentiation. The T cell repertoire is generated in the thymus, by V-(D)-J rearrangement. This repertoire is then shaped by intrathymic selection events to generate a peripheral T cell pool of self-MH restricted, non-autoaggressive T cells. Post-thymic interaction of alpha-beta TR with the pMH complexes shapes TR structural and functional avidity. The chain is T cell receptor beta variable 4-2 from Homo sapiens (Human).